We begin with the raw amino-acid sequence, 499 residues long: Maturase K (499 aa).

The protein belongs to the intron maturase 2 family. MatK subfamily.

The protein resides in the plastid. It localises to the chloroplast. Functionally, usually encoded in the trnK tRNA gene intron. Probably assists in splicing its own and other chloroplast group II introns. The chain is Maturase K from Ceratonia siliqua (Carob).